The primary structure comprises 254 residues: Ribonuclease HII (254 aa).

Residues 70–254 (TCIAGIDEAG…SFAPVKSVIS (185 aa)) enclose the RNase H type-2 domain. Residues D76, E77, and D168 each coordinate a divalent metal cation.

Belongs to the RNase HII family. Requires Mn(2+) as cofactor. Mg(2+) serves as cofactor.

The protein resides in the cytoplasm. The enzyme catalyses Endonucleolytic cleavage to 5'-phosphomonoester.. In terms of biological role, endonuclease that specifically degrades the RNA of RNA-DNA hybrids. The chain is Ribonuclease HII from Bacillus pumilus (strain SAFR-032).